A 110-amino-acid polypeptide reads, in one-letter code: UPF0060 membrane protein Nmul_A0351 (110 aa).

Transmembrane regions (helical) follow at residues 7 to 27, 33 to 53, 63 to 83, and 87 to 107; these read LFLFLATALAEIVGCYLPYLW, SAWLLVPAAASLALFAWLLTL, AAYGGVYVSVAVLWLWAVDGV, and AWDMAGSLLALTGMAIIMFGP.

Belongs to the UPF0060 family.

It localises to the cell inner membrane. This is UPF0060 membrane protein Nmul_A0351 from Nitrosospira multiformis (strain ATCC 25196 / NCIMB 11849 / C 71).